Consider the following 100-residue polypeptide: Small ribosomal subunit protein uS14c (100 aa).

This sequence belongs to the universal ribosomal protein uS14 family. In terms of assembly, part of the 30S ribosomal subunit.

It is found in the plastid. The protein localises to the chloroplast. Functionally, binds 16S rRNA, required for the assembly of 30S particles. This Fagopyrum esculentum subsp. ancestrale (Wild buckwheat) protein is Small ribosomal subunit protein uS14c.